A 984-amino-acid chain; its full sequence is Hyaluronate lyase (984 aa).

Polar residues-rich tracts occupy residues 1 to 12, 19 to 32, and 54 to 66; these read MKQVVDNQTQNK, DFNQTNPVSGSWSH, and IQRTEQGQVSLSS. 2 disordered regions span residues 1-32 and 49-68; these read MKQVVDNQTQNKELVKNGDFNQTNPVSGSWSH and DKSPIIQRTEQGQVSLSSDK. An N-terminal signal peptide occupies residues 1–40; the sequence is MKQVVDNQTQNKELVKNGDFNQTNPVSGSWSHTSAREWSA. Catalysis depends on residues Asn-429, His-479, and Tyr-488. Residues 701 to 726 are compositionally biased toward basic and acidic residues; sequence TEKDAKREDTTKEFMSKHSKDAKEKT. The segment at 701-728 is disordered; sequence TEKDAKREDTTKEFMSKHSKDAKEKTGQ.

This sequence belongs to the polysaccharide lyase 8 family.

Its subcellular location is the secreted. The catalysed reaction is [hyaluronan](n) = n 3-(4-deoxy-beta-D-gluc-4-enuronosyl)-N-acetyl-D-glucosamine + H2O. The polypeptide is Hyaluronate lyase (Streptococcus agalactiae serotype III (strain NEM316)).